The sequence spans 602 residues: Aspartate--tRNA(Asp/Asn) ligase (602 aa).

L-aspartate is bound at residue Glu176. The interval 200–203 is aspartate; the sequence is QQFK. The L-aspartate site is built by Arg222 and His452. 222–224 contributes to the ATP binding site; sequence RDE. Residue Glu490 coordinates ATP. Arg497 contributes to the L-aspartate binding site. 542-545 serves as a coordination point for ATP; sequence GIDR.

It belongs to the class-II aminoacyl-tRNA synthetase family. Type 1 subfamily. As to quaternary structure, homodimer.

It localises to the cytoplasm. It carries out the reaction tRNA(Asx) + L-aspartate + ATP = L-aspartyl-tRNA(Asx) + AMP + diphosphate. Its function is as follows. Aspartyl-tRNA synthetase with relaxed tRNA specificity since it is able to aspartylate not only its cognate tRNA(Asp) but also tRNA(Asn). Reaction proceeds in two steps: L-aspartate is first activated by ATP to form Asp-AMP and then transferred to the acceptor end of tRNA(Asp/Asn). This is Aspartate--tRNA(Asp/Asn) ligase from Rickettsia canadensis (strain McKiel).